A 211-amino-acid polypeptide reads, in one-letter code: Endoplasmic reticulum vesicle protein 25 (211 aa).

The first 19 residues, 1–19 (MKSIVSVLTLLLLINAVAA), serve as a signal peptide directing secretion. Topologically, residues 20 to 180 (LRFVLPAKDK…TNESTNRRVK (161 aa)) are lumenal. Positions 33–121 (PFCVRDFVKN…TKEIDLSVAI (89 aa)) constitute a GOLD domain. Residues 181 to 201 (FFSVGITLALIALGVWQIIYL) form a helical membrane-spanning segment. Topologically, residues 202-211 (RSYFRSKHII) are cytoplasmic.

It belongs to the EMP24/GP25L family.

It is found in the endoplasmic reticulum membrane. The protein localises to the golgi apparatus membrane. Constituent of COPII-coated endoplasmic reticulum-derived transport vesicles. Required for efficient transport of a subset of secretory proteins to the Golgi. Facilitates retrograde transport from the Golgi to the endoplasmic reticulum. The polypeptide is Endoplasmic reticulum vesicle protein 25 (ERV25) (Yarrowia lipolytica (strain CLIB 122 / E 150) (Yeast)).